The primary structure comprises 119 residues: Large ribosomal subunit protein uL24 (119 aa).

The protein belongs to the universal ribosomal protein uL24 family. In terms of assembly, part of the 50S ribosomal subunit.

One of two assembly initiator proteins, it binds directly to the 5'-end of the 23S rRNA, where it nucleates assembly of the 50S subunit. In terms of biological role, one of the proteins that surrounds the polypeptide exit tunnel on the outside of the subunit. The polypeptide is Large ribosomal subunit protein uL24 (Leifsonia xyli subsp. xyli (strain CTCB07)).